A 440-amino-acid chain; its full sequence is D-serine dehydratase (440 aa).

Lys116 is modified (N6-(pyridoxal phosphate)lysine).

The protein belongs to the serine/threonine dehydratase family. DsdA subfamily. Monomer. Pyridoxal 5'-phosphate serves as cofactor.

It carries out the reaction D-serine = pyruvate + NH4(+). This is D-serine dehydratase from Salmonella schwarzengrund (strain CVM19633).